The chain runs to 734 residues: Polyribonucleotide nucleotidyltransferase (734 aa).

2 residues coordinate Mg(2+): Asp497 and Asp503. The 60-residue stretch at 564–623 folds into the KH domain; that stretch reads PRIIHITIDPDKIRDVIGPGGKVIKKIVEETGAEIDIEDDGRVFIAAVDQEKGRKAQEII. The region spanning 633–707 is the S1 motif domain; sequence GEIYTGRVTR…SQGRLKLSKK (75 aa). Positions 700–734 are disordered; sequence GRLKLSKKEATPPPESTAMKEGRAHRPSRRRESAR. The segment covering 717 to 734 has biased composition (basic and acidic residues); the sequence is AMKEGRAHRPSRRRESAR.

Belongs to the polyribonucleotide nucleotidyltransferase family. The cofactor is Mg(2+).

It localises to the cytoplasm. The catalysed reaction is RNA(n+1) + phosphate = RNA(n) + a ribonucleoside 5'-diphosphate. Its function is as follows. Involved in mRNA degradation. Catalyzes the phosphorolysis of single-stranded polyribonucleotides processively in the 3'- to 5'-direction. The sequence is that of Polyribonucleotide nucleotidyltransferase from Pelotomaculum thermopropionicum (strain DSM 13744 / JCM 10971 / SI).